The following is a 241-amino-acid chain: Probable transcriptional regulator PhnF (241 aa).

Positions 11 to 78 constitute an HTH gntR-type domain; the sequence is PTRYQEIAAK…QGVGVLVLMR (68 aa). Residues 38–57 constitute a DNA-binding region (H-T-H motif); the sequence is EQQLAARFEVNRHTLRRAID.

Functionally, belongs to an operon involved in alkylphosphonate uptake and C-P lyase. Exact function not known. By similarity could be a transcriptional regulator. In Escherichia coli (strain K12), this protein is Probable transcriptional regulator PhnF (phnF).